Reading from the N-terminus, the 892-residue chain is Microsomal triglyceride transfer protein homolog (892 aa).

The signal sequence occupies residues 1–19 (MFSSRIWLLLAVTVGVCLA).

In terms of assembly, heterodimer; heterodimerizes with protein disulfide isomerase.

It localises to the endoplasmic reticulum. Its function is as follows. Catalyzes the transport of cholesteryl ester, and phospholipid between phospholipid surfaces. Does not catalyze transport of triglycerides. Required for the assembly and secretion of plasma lipoproteins that contain apolipoprotein B. Required for normal expression of klf-3. The polypeptide is Microsomal triglyceride transfer protein homolog (Caenorhabditis elegans).